The chain runs to 85 residues: Homeobox protein knotted-1-like 7 (85 aa).

Positions 1–21 constitute an ELK domain; that stretch reads ELKNELKQGYKEKLVDIREEI. Residues 22–85 constitute a DNA-binding region (homeobox; TALE-type); sequence MRKRRAGKLP…NQRKRNWHSN (64 aa).

The protein belongs to the TALE/KNOX homeobox family. In terms of tissue distribution, expressed in all tissues examined. Highest expression in leaves.

The protein localises to the nucleus. This Zea mays (Maize) protein is Homeobox protein knotted-1-like 7 (KNOX7).